We begin with the raw amino-acid sequence, 743 residues long: NAD(P)H-quinone oxidoreductase subunit 5, chloroplastic (743 aa).

The next 14 membrane-spanning stretches (helical) occupy residues 9-29 (WIIPFVPLPVPMLIGVGLLLF), 40-60 (WAFHSVLLLSIVMIFSIDLSI), 89-109 (IDPLTSIMLILITTVGIMVLI), 125-145 (FAYMSFFSTSMLGLVTSSNLI), 147-167 (IYIFWELVGMCSYLLIGFWFT), 184-204 (IGDLGLLLGILGFYWITGSFE), 219-239 (NEVNLVFLTICAVLLFAGAVA), 258-278 (TPISALIHAATMVAAGIFLVA), 280-300 (LLPLFIVIPYILNLISFIGII), 396-416 (TAFFLGTLSLCGIPPLACFWS), 425-445 (WLYSPIFAIIACSTAGLTAFY), 548-568 (LLPLLVLVLFTLFVGAIGIPF), 607-627 (IFSVSIAYFGIVIASFLYKPV), and 723-743 (YLFLYLSYVSIFLLIYYFLNL).

This sequence belongs to the complex I subunit 5 family. NDH is composed of at least 16 different subunits, 5 of which are encoded in the nucleus.

It is found in the plastid. The protein localises to the chloroplast thylakoid membrane. It carries out the reaction a plastoquinone + NADH + (n+1) H(+)(in) = a plastoquinol + NAD(+) + n H(+)(out). The catalysed reaction is a plastoquinone + NADPH + (n+1) H(+)(in) = a plastoquinol + NADP(+) + n H(+)(out). In terms of biological role, NDH shuttles electrons from NAD(P)H:plastoquinone, via FMN and iron-sulfur (Fe-S) centers, to quinones in the photosynthetic chain and possibly in a chloroplast respiratory chain. The immediate electron acceptor for the enzyme in this species is believed to be plastoquinone. Couples the redox reaction to proton translocation, and thus conserves the redox energy in a proton gradient. This is NAD(P)H-quinone oxidoreductase subunit 5, chloroplastic (ndhF) from Carpenteria californica (Tree anemone).